The primary structure comprises 143 residues: Sec-independent protein translocase protein TatB (143 aa).

Residues 2-22 (FGNIGWGEFMVLLVAALVILG) traverse the membrane as a helical segment. Positions 97 to 143 (FDKPGSVSFDKSNPGTKAVSADPSTPTAPQNKPLAAGERPPIDLDAT) are disordered.

This sequence belongs to the TatB family. The Tat system comprises two distinct complexes: a TatABC complex, containing multiple copies of TatA, TatB and TatC subunits, and a separate TatA complex, containing only TatA subunits. Substrates initially bind to the TatABC complex, which probably triggers association of the separate TatA complex to form the active translocon.

It is found in the cell membrane. Its function is as follows. Part of the twin-arginine translocation (Tat) system that transports large folded proteins containing a characteristic twin-arginine motif in their signal peptide across membranes. Together with TatC, TatB is part of a receptor directly interacting with Tat signal peptides. TatB may form an oligomeric binding site that transiently accommodates folded Tat precursor proteins before their translocation. This chain is Sec-independent protein translocase protein TatB, found in Rhodococcus opacus (strain B4).